Here is a 223-residue protein sequence, read N- to C-terminus: MSTLHKVKAYFGMAPMEDYDDEYYDDRGPSRGYSRPRFEDDYGRYEGRDFEDPRRDPRAGMRADLRGEPADYPPPGGYRGGYPDEARFQPREFDRADMARPRFGSWLRNPTRGSLAMDPRRMAMMFEEGHPLSKITTLRPKDYSEARTIGERFRDGTPVIMDLVSMDNADAKRLVDFAAGLAFALRGSFDKVATKVFLLSPADVDVTPEERRRIAETGFYAYQ.

Residues 19 to 81 form a disordered region; it reads YDDEYYDDRG…YPPPGGYRGG (63 aa). The segment covering 36–69 has biased composition (basic and acidic residues); it reads PRFEDDYGRYEGRDFEDPRRDPRAGMRADLRGEP.

It belongs to the SepF family. Homodimer. Interacts with FtsZ.

The protein resides in the cytoplasm. Its function is as follows. Cell division protein that is part of the divisome complex and is recruited early to the Z-ring. Probably stimulates Z-ring formation, perhaps through the cross-linking of FtsZ protofilaments. Its function overlaps with FtsA. The sequence is that of Cell division protein SepF from Mycobacterium ulcerans (strain Agy99).